The primary structure comprises 157 residues: Endoribonuclease YbeY (157 aa).

The Zn(2+) site is built by H113, H117, and H123.

It belongs to the endoribonuclease YbeY family. Requires Zn(2+) as cofactor.

The protein localises to the cytoplasm. Functionally, single strand-specific metallo-endoribonuclease involved in late-stage 70S ribosome quality control and in maturation of the 3' terminus of the 16S rRNA. The chain is Endoribonuclease YbeY from Ehrlichia ruminantium (strain Gardel).